Consider the following 341-residue polypeptide: Anthranilate phosphoribosyltransferase (341 aa).

5-phospho-alpha-D-ribose 1-diphosphate is bound by residues glycine 85, 88-89 (GD), threonine 93, 95-98 (NIST), 113-121 (KHGNRSASG), and serine 125. Residue glycine 85 coordinates anthranilate. Serine 97 provides a ligand contact to Mg(2+). Asparagine 116 contacts anthranilate. Arginine 171 is an anthranilate binding site. Mg(2+) is bound by residues aspartate 230 and glutamate 231.

Belongs to the anthranilate phosphoribosyltransferase family. In terms of assembly, homodimer. Mg(2+) serves as cofactor.

It carries out the reaction N-(5-phospho-beta-D-ribosyl)anthranilate + diphosphate = 5-phospho-alpha-D-ribose 1-diphosphate + anthranilate. It participates in amino-acid biosynthesis; L-tryptophan biosynthesis; L-tryptophan from chorismate: step 2/5. In terms of biological role, catalyzes the transfer of the phosphoribosyl group of 5-phosphorylribose-1-pyrophosphate (PRPP) to anthranilate to yield N-(5'-phosphoribosyl)-anthranilate (PRA). The polypeptide is Anthranilate phosphoribosyltransferase (Prochlorococcus marinus (strain SARG / CCMP1375 / SS120)).